We begin with the raw amino-acid sequence, 343 residues long: uncharacterized protein (343 aa).

3 disordered regions span residues 1–25, 62–119, and 169–188; these read MSSK…LSGT, KNIR…DCSD, and NPKI…TKKS. Positions 62 to 71 are enriched in basic residues; that stretch reads KNIRQFKKSQ. Positions 72-81 are enriched in basic and acidic residues; that stretch reads NKTDTEKSGE. The segment covering 83–107 has biased composition (acidic residues); the sequence is NDSDYSDYSDNSDDVDDLDDVDDLN.

This is an uncharacterized protein from Acanthamoeba polyphaga (Amoeba).